A 306-amino-acid chain; its full sequence is Porphobilinogen deaminase (306 aa).

Cys239 is modified (S-(dipyrrolylmethanemethyl)cysteine).

This sequence belongs to the HMBS family. In terms of assembly, monomer. The cofactor is dipyrromethane.

It carries out the reaction 4 porphobilinogen + H2O = hydroxymethylbilane + 4 NH4(+). The protein operates within porphyrin-containing compound metabolism; protoporphyrin-IX biosynthesis; coproporphyrinogen-III from 5-aminolevulinate: step 2/4. Tetrapolymerization of the monopyrrole PBG into the hydroxymethylbilane pre-uroporphyrinogen in several discrete steps. The sequence is that of Porphobilinogen deaminase from Helicobacter pylori (strain Shi470).